Consider the following 418-residue polypeptide: Sonic hedgehog protein (418 aa).

An N-terminal signal peptide occupies residues 1 to 23; it reads MRLLTRVLLVSLLTLSLVVSGLA. Cys-24 carries the N-palmitoyl cysteine lipid modification. A Cardin-Weintraub motif is present at residues 32 to 38; sequence RRRHPKK. Residues Glu-89, Glu-90, Asp-95, Thr-125, Glu-126, Asp-129, and Asp-131 each contribute to the Ca(2+) site. His-140, Asp-147, and His-182 together coordinate Zn(2+). The Cholesterol glycine ester moiety is linked to residue Gly-197.

It belongs to the hedgehog family. In terms of assembly, interacts with HHATL/GUP1 which negatively regulates HHAT-mediated palmitoylation of the SHH N-terminus. Interacts with BOC and CDON. Interacts with HHIP. Interacts with DISP1 via its cholesterol anchor. Interacts with SCUBE2. Multimer. The C-terminal domain displays an autoproteolysis activity and a cholesterol transferase activity. Both activities result in the cleavage of the full-length protein and covalent attachment of a cholesterol moiety to the C-terminal of the newly generated N-terminal fragment (ShhN). Cholesterylation is required for the sonic hedgehog protein N-product targeting to lipid rafts and multimerization. ShhN is the active species in both local and long-range signaling, whereas the C-product (ShhC) is degraded in the reticulum endoplasmic. Post-translationally, N-palmitoylation by HHAT of ShhN is required for sonic hedgehog protein N-product multimerization and full activity. It is a prerequisite for the membrane-proximal positioning and the subsequent shedding of this N-terminal peptide. In terms of processing, the lipidated N- and C-terminal peptides of ShhNp can be cleaved (shedding). The N-terminal palmitoylated peptide is cleaved at the Cardin-Weintraub (CW) motif site. The cleavage reduced the interactions with heparan sulfate. The cleavage is enhanced by SCUBE2. As to expression, expressed in the ventral midline of the neural tube and brain. Also found in the notochord and in developing fin bud. In the developing brain, expression occurs in domains that include a discrete region in the floor of the diencephalon.

Its subcellular location is the endoplasmic reticulum membrane. It is found in the golgi apparatus membrane. The protein resides in the cell membrane. The enzyme catalyses glycyl-L-cysteinyl-[protein] + cholesterol + H(+) = [protein]-C-terminal glycyl cholesterol ester + N-terminal L-cysteinyl-[protein]. Its function is as follows. The C-terminal part of the sonic hedgehog protein precursor displays an autoproteolysis and a cholesterol transferase activity. Both activities result in the cleavage of the full-length protein into two parts (ShhN and ShhC) followed by the covalent attachment of a cholesterol moiety to the C-terminal of the newly generated ShhN. Both activities occur in the endoplasmic reticulum. Once cleaved, ShhC is degraded in the endoplasmic reticulum. In terms of biological role, the dually lipidated sonic hedgehog protein N-product (ShhNp) is a morphogen which is essential for a variety of patterning events during development. Involved in dorso-ventral patterning of the brain and in early patterning of the developing eyes. Binds to the patched (PTCH1) receptor, which functions in association with smoothened (SMO), to activate the transcription of target genes. In the absence of SHH, PTCH1 represses the constitutive signaling activity of SMO. In Danio rerio (Zebrafish), this protein is Sonic hedgehog protein (shha).